The sequence spans 223 residues: Uracil phosphoribosyltransferase (223 aa).

Residues R86, R111, and 145–153 each bind 5-phospho-alpha-D-ribose 1-diphosphate; that span reads DPILATGST. Uracil is bound by residues I209 and 214 to 216; that span reads GDA. Residue D215 coordinates 5-phospho-alpha-D-ribose 1-diphosphate.

The protein belongs to the UPRTase family. Requires Mg(2+) as cofactor.

It catalyses the reaction UMP + diphosphate = 5-phospho-alpha-D-ribose 1-diphosphate + uracil. It participates in pyrimidine metabolism; UMP biosynthesis via salvage pathway; UMP from uracil: step 1/1. Its activity is regulated as follows. Allosterically activated by GTP. Catalyzes the conversion of uracil and 5-phospho-alpha-D-ribose 1-diphosphate (PRPP) to UMP and diphosphate. The polypeptide is Uracil phosphoribosyltransferase (Natronomonas pharaonis (strain ATCC 35678 / DSM 2160 / CIP 103997 / JCM 8858 / NBRC 14720 / NCIMB 2260 / Gabara) (Halobacterium pharaonis)).